A 462-amino-acid polypeptide reads, in one-letter code: MPAREYNYVEGFGGYGSLDDDDSDRDSERRNHDLGQRTITTSPTGVSRHAALNRYMIPGRINPLFRPTDAAQPPIVSTSTSASATEPTNRIGPGRIKETPETNFNAFLIAQLTRMEEQNANLKEEISLMKKEQELFFLENQKKLEKGFKDINKYVEDVSAMKEVFKEVVGIMTGERIRFIDHTGENVTPQEAARVGNPSTSTQAHQSQSRSTNWQEYSMHASILAGDPRIKPEPGLSDFENGEYDGNESDENATTRNLPLNNPDSVSNADDSNNQLDGTGNENDIRNRRGCVGTSYKLNRAIQNVTDAAREYFEGLPGQPSVLSLERRYGSTWRRSAKERTLFTKRMTIIKRIIDIKDDPSKYGLSLPENKISRNQAIKVVENIRLGNNTFKGHHCRLSMSQLYEYFSKKMDKLEDYSLTLKRRGKPRRIFLLEEREARLSLQQPHSIPNSSTGTPEHDQDT.

Disordered regions lie at residues 11–43 and 66–97; these read GFGG…TTSP and RPTD…GRIK. 2 positions are modified to phosphoserine: serine 17 and serine 23. The span at 26–35 shows a compositional bias: basic and acidic residues; it reads DSERRNHDLG. Residues 81-140 are homodimerization region; sequence SASATEPTNRIGPGRIKETPETNFNAFLIAQLTRMEEQNANLKEEISLMKKEQELFFLEN. Residues 105–135 adopt a coiled-coil conformation; the sequence is NAFLIAQLTRMEEQNANLKEEISLMKKEQEL. Disordered stretches follow at residues 190 to 214 and 226 to 289; these read QEAA…STNW and GDPR…RNRR. Over residues 197-214 the composition is skewed to polar residues; it reads NPSTSTQAHQSQSRSTNW. A Glycyl lysine isopeptide (Lys-Gly) (interchain with G-Cter in SUMO) cross-link involves residue lysine 231. 2 positions are modified to phosphoserine: serine 237 and serine 249. Residues 240 to 251 are compositionally biased toward acidic residues; sequence ENGEYDGNESDE. A compositionally biased stretch (polar residues) spans 252 to 282; sequence NATTRNLPLNNPDSVSNADDSNNQLDGTGNE. Residue threonine 254 is modified to Phosphothreonine. The GCR1 DNA-binding region stretch occupies residues 296-385; sequence YKLNRAIQNV…QAIKVVENIR (90 aa). Positions 441–455 are enriched in polar residues; that stretch reads SLQQPHSIPNSSTGT. The segment at 441-462 is disordered; it reads SLQQPHSIPNSSTGTPEHDQDT.

As to quaternary structure, homodimer. Interacts with SLX5. Sumoylated at Lys-231 and subsequently ubiquitinated by the SUMO-targeted ubiquitin ligase (STUbL) complex SLX5/SLX8.

It is found in the chromosome. Transcription factor-like protein that binds to specific DNA motifs called ub-HS-motif associated with several locations where proteins other than histone H2B are ubiquitinated (ub-hotspots). Ubiquitination at these sites depends on the SUMO-targeted ubiquitin ligase (STUbL) complex SLX5/SLX8 and protein turnover on the CDC48 segregase. UBC9, SIZ1, or SIZ2 sumoylate DNA-bound EUC1 to stabilize its DNA-binding. Sumoylated EUC1 acts a cofactor required for the recruitment of the SLX5/SLX8 STUbL complex via specific contacts between EUC1 and SLX5, as well as an additional SUMO-mediated interaction. SLX5/SLX8 then ubiquitinates EUC1 and presumably other targets at ub-hotspots, and the CDC48/UFD1/NPL4 complex, together with UBX4 and UBX5, removes Lys-48-linked ubiquitinated proteins from chromatin. Ubiquitinated proteins could be either degraded by the proteasome or recycled by deubiquitination. EUC1 itself does not seem to underlie extensive turnover, as it is a very stable protein. EUC1 is able to act as a transcription factor, but its function at ub-hotspots does not seem to depend on this ability. EUC1-mediated ub-hotspots are crucial during stress responses when gene expression control is impaired. The sequence is that of Transcription factor-like protein EUC1 from Saccharomyces cerevisiae (strain ATCC 204508 / S288c) (Baker's yeast).